A 266-amino-acid chain; its full sequence is Probable carboxylesterase Os04g0669500 (266 aa).

Residues S154, D208, and H240 each act as charge relay system in the active site.

It belongs to the AB hydrolase superfamily. AB hydrolase 2 family.

In terms of biological role, possesses carboxylesterase activity in vitro. The protein is Probable carboxylesterase Os04g0669500 of Oryza sativa subsp. japonica (Rice).